Here is a 430-residue protein sequence, read N- to C-terminus: Adenylosuccinate synthetase (430 aa).

GTP contacts are provided by residues 12–18 (GDEGKGK) and 40–42 (GHT). Asp-13 (proton acceptor) is an active-site residue. Residues Asp-13 and Gly-40 each contribute to the Mg(2+) site. Residues 13–16 (DEGK), 38–41 (NAGH), Thr-129, Arg-143, Gln-224, Thr-239, and Arg-303 each bind IMP. The active-site Proton donor is the His-41. 299–305 (TVSNRER) contributes to the substrate binding site. GTP-binding positions include Arg-305, 331 to 333 (KLD), and 413 to 415 (STG).

Belongs to the adenylosuccinate synthetase family. In terms of assembly, homodimer. Mg(2+) is required as a cofactor.

It localises to the cytoplasm. It catalyses the reaction IMP + L-aspartate + GTP = N(6)-(1,2-dicarboxyethyl)-AMP + GDP + phosphate + 2 H(+). It participates in purine metabolism; AMP biosynthesis via de novo pathway; AMP from IMP: step 1/2. Functionally, plays an important role in the de novo pathway of purine nucleotide biosynthesis. Catalyzes the first committed step in the biosynthesis of AMP from IMP. In Ehrlichia ruminantium (strain Gardel), this protein is Adenylosuccinate synthetase.